The chain runs to 450 residues: Phosphoglucosamine mutase (450 aa).

Ser101 serves as the catalytic Phosphoserine intermediate. Residues Ser101, Asp240, Asp242, and Asp244 each coordinate Mg(2+). Residue Ser101 is modified to Phosphoserine.

The protein belongs to the phosphohexose mutase family. Requires Mg(2+) as cofactor. In terms of processing, activated by phosphorylation.

The catalysed reaction is alpha-D-glucosamine 1-phosphate = D-glucosamine 6-phosphate. Catalyzes the conversion of glucosamine-6-phosphate to glucosamine-1-phosphate. This chain is Phosphoglucosamine mutase, found in Streptococcus equi subsp. zooepidemicus (strain MGCS10565).